A 353-amino-acid polypeptide reads, in one-letter code: Photosystem II protein D1 (353 aa).

Residue threonine 2 is modified to N-acetylthreonine. At threonine 2 the chain carries Phosphothreonine. 3 helical membrane-spanning segments follow: residues 29–46, 118–133, and 142–156; these read YIGW…TATS, HFLL…EWEL, and WIAV…AATA. Histidine 118 contacts chlorophyll a. A pheophytin a-binding site is contributed by tyrosine 126. [CaMn4O5] cluster contacts are provided by aspartate 170 and glutamate 189. Residues 197-218 traverse the membrane as a helical segment; sequence FHMLGVAGVFGGSLFSAMHGSL. Residue histidine 198 coordinates chlorophyll a. Residues histidine 215 and 264-265 contribute to the a quinone site; that span reads SF. Histidine 215 lines the Fe cation pocket. Fe cation is bound at residue histidine 272. A helical membrane pass occupies residues 274 to 288; the sequence is FLAAWPVVGIWFTAL. Residues histidine 332, glutamate 333, aspartate 342, and alanine 344 each coordinate [CaMn4O5] cluster. Positions 345–353 are excised as a propeptide; that stretch reads AVEAPAVNG.

It belongs to the reaction center PufL/M/PsbA/D family. As to quaternary structure, PSII is composed of 1 copy each of membrane proteins PsbA, PsbB, PsbC, PsbD, PsbE, PsbF, PsbH, PsbI, PsbJ, PsbK, PsbL, PsbM, PsbT, PsbX, PsbY, PsbZ, Psb30/Ycf12, at least 3 peripheral proteins of the oxygen-evolving complex and a large number of cofactors. It forms dimeric complexes. Requires The D1/D2 heterodimer binds P680, chlorophylls that are the primary electron donor of PSII, and subsequent electron acceptors. It shares a non-heme iron and each subunit binds pheophytin, quinone, additional chlorophylls, carotenoids and lipids. D1 provides most of the ligands for the Mn4-Ca-O5 cluster of the oxygen-evolving complex (OEC). There is also a Cl(-1) ion associated with D1 and D2, which is required for oxygen evolution. The PSII complex binds additional chlorophylls, carotenoids and specific lipids. as cofactor. Tyr-161 forms a radical intermediate that is referred to as redox-active TyrZ, YZ or Y-Z. In terms of processing, C-terminally processed by CTPA; processing is essential to allow assembly of the oxygen-evolving complex and thus photosynthetic growth.

The protein resides in the plastid. It is found in the chloroplast thylakoid membrane. It carries out the reaction 2 a plastoquinone + 4 hnu + 2 H2O = 2 a plastoquinol + O2. Functionally, photosystem II (PSII) is a light-driven water:plastoquinone oxidoreductase that uses light energy to abstract electrons from H(2)O, generating O(2) and a proton gradient subsequently used for ATP formation. It consists of a core antenna complex that captures photons, and an electron transfer chain that converts photonic excitation into a charge separation. The D1/D2 (PsbA/PsbD) reaction center heterodimer binds P680, the primary electron donor of PSII as well as several subsequent electron acceptors. This Conocephalum conicum (Snakeskin liverwort) protein is Photosystem II protein D1.